A 270-amino-acid chain; its full sequence is Tryptophan synthase alpha chain (270 aa).

Catalysis depends on proton acceptor residues E49 and D60.

It belongs to the TrpA family. In terms of assembly, tetramer of two alpha and two beta chains.

The enzyme catalyses (1S,2R)-1-C-(indol-3-yl)glycerol 3-phosphate + L-serine = D-glyceraldehyde 3-phosphate + L-tryptophan + H2O. It participates in amino-acid biosynthesis; L-tryptophan biosynthesis; L-tryptophan from chorismate: step 5/5. In terms of biological role, the alpha subunit is responsible for the aldol cleavage of indoleglycerol phosphate to indole and glyceraldehyde 3-phosphate. This chain is Tryptophan synthase alpha chain, found in Pseudomonas fluorescens (strain Pf0-1).